Consider the following 139-residue polypeptide: Large ribosomal subunit protein uL13 (139 aa).

The protein belongs to the universal ribosomal protein uL13 family. As to quaternary structure, part of the 50S ribosomal subunit.

This protein is one of the early assembly proteins of the 50S ribosomal subunit, although it is not seen to bind rRNA by itself. It is important during the early stages of 50S assembly. The polypeptide is Large ribosomal subunit protein uL13 (Wolinella succinogenes (strain ATCC 29543 / DSM 1740 / CCUG 13145 / JCM 31913 / LMG 7466 / NCTC 11488 / FDC 602W) (Vibrio succinogenes)).